A 102-amino-acid polypeptide reads, in one-letter code: Aspartyl/glutamyl-tRNA(Asn/Gln) amidotransferase subunit C (102 aa).

The protein belongs to the GatC family. As to quaternary structure, heterotrimer of A, B and C subunits.

The enzyme catalyses L-glutamyl-tRNA(Gln) + L-glutamine + ATP + H2O = L-glutaminyl-tRNA(Gln) + L-glutamate + ADP + phosphate + H(+). The catalysed reaction is L-aspartyl-tRNA(Asn) + L-glutamine + ATP + H2O = L-asparaginyl-tRNA(Asn) + L-glutamate + ADP + phosphate + 2 H(+). Functionally, allows the formation of correctly charged Asn-tRNA(Asn) or Gln-tRNA(Gln) through the transamidation of misacylated Asp-tRNA(Asn) or Glu-tRNA(Gln) in organisms which lack either or both of asparaginyl-tRNA or glutaminyl-tRNA synthetases. The reaction takes place in the presence of glutamine and ATP through an activated phospho-Asp-tRNA(Asn) or phospho-Glu-tRNA(Gln). This Leuconostoc citreum (strain KM20) protein is Aspartyl/glutamyl-tRNA(Asn/Gln) amidotransferase subunit C.